Consider the following 170-residue polypeptide: Cytochrome P450 monooxygenase oryQ (170 aa).

Residue Cys-85 participates in heme binding.

Belongs to the cytochrome P450 family. Requires heme as cofactor.

It participates in secondary metabolite biosynthesis. Functionally, cytochrome P450 monooxygenase; part of the gene cluster that mediates the biosynthesis of oryzines, natural products with an unusual maleidride backbone. The two subunits of the fungal fatty acid synthase oryfasA and oryfasB probably form octenoic acid. This fatty acid is most likely activated by the acyl-CoA ligase oryP to give octenyl-CoA before the citrate synthase-like protein oryE catalyzes condensation with oxaloacetate to form tricarboxylic acid. The next steps of the pathways are conjectural, but a favorite possible route has been proposed, beginning with decarboxylation and concomitant dehydration by the decarboxylase oryM, followed by tautomerization, which may lead to the production of a diene intermediate. Reduction of this diene intermediate could give the known metabolite piliformic acid. On the pathway to oryzine B and oryzine A, however, hydroxylation of the diene by the alpha-ketoglutarate-dependent dioxygenase oryG and lactonisation by the lactonohydrolases oryH or oryL could give oryzine B directly. Finally, enoyl reduction by the dehydrogenase oryD would then convert oryzine B into oryzine A. This chain is Cytochrome P450 monooxygenase oryQ, found in Aspergillus oryzae (strain ATCC 42149 / RIB 40) (Yellow koji mold).